The chain runs to 122 residues: Crustacean hyperglycemic hormones 5 (122 aa).

Residues 1-26 (MSLGLIASRLVAVALVVVVACSTTWA) form the signal peptide. Intrachain disulfides connect Cys55-Cys91, Cys71-Cys87, and Cys74-Cys100. Position 120 is a valine amide (Val120).

Belongs to the arthropod CHH/MIH/GIH/VIH hormone family.

Its subcellular location is the secreted. Hormone found in the sinus gland of isopods and decapods which controls the blood sugar level. Has a secretagogue action over the amylase released from the midgut gland. May act as a stress hormone and may be involved in the control of molting and reproduction. The chain is Crustacean hyperglycemic hormones 5 (CHH5) from Penaeus monodon (Giant tiger prawn).